The chain runs to 274 residues: NH(3)-dependent NAD(+) synthetase (274 aa).

46 to 53 is a binding site for ATP; that stretch reads GISGGQDS. A Mg(2+)-binding site is contributed by Asp-52. Arg-140 provides a ligand contact to deamido-NAD(+). Position 160 (Thr-160) interacts with ATP. Residue Glu-165 participates in Mg(2+) binding. Deamido-NAD(+) contacts are provided by Lys-173 and Asp-180. Positions 189 and 211 each coordinate ATP. 260–261 provides a ligand contact to deamido-NAD(+); sequence HK.

It belongs to the NAD synthetase family. In terms of assembly, homodimer.

The enzyme catalyses deamido-NAD(+) + NH4(+) + ATP = AMP + diphosphate + NAD(+) + H(+). It functions in the pathway cofactor biosynthesis; NAD(+) biosynthesis; NAD(+) from deamido-NAD(+) (ammonia route): step 1/1. Catalyzes the ATP-dependent amidation of deamido-NAD to form NAD. Uses ammonia as a nitrogen source. The chain is NH(3)-dependent NAD(+) synthetase from Streptococcus pyogenes serotype M6 (strain ATCC BAA-946 / MGAS10394).